The following is a 367-amino-acid chain: 3-isopropylmalate dehydrogenase (367 aa).

77 to 90 (GPKWDAVPYEVRPE) serves as a coordination point for NAD(+). The substrate site is built by Arg97, Arg107, Arg135, and Asp226. Residues Asp226, Asp250, and Asp254 each coordinate Mg(2+). Position 290 to 302 (290 to 302 (GSAPDIAGKGIAN)) interacts with NAD(+).

Belongs to the isocitrate and isopropylmalate dehydrogenases family. LeuB type 1 subfamily. As to quaternary structure, homodimer. Mg(2+) is required as a cofactor. It depends on Mn(2+) as a cofactor.

It is found in the cytoplasm. It carries out the reaction (2R,3S)-3-isopropylmalate + NAD(+) = 4-methyl-2-oxopentanoate + CO2 + NADH. It participates in amino-acid biosynthesis; L-leucine biosynthesis; L-leucine from 3-methyl-2-oxobutanoate: step 3/4. In terms of biological role, catalyzes the oxidation of 3-carboxy-2-hydroxy-4-methylpentanoate (3-isopropylmalate) to 3-carboxy-4-methyl-2-oxopentanoate. The product decarboxylates to 4-methyl-2 oxopentanoate. The protein is 3-isopropylmalate dehydrogenase of Mesorhizobium japonicum (strain LMG 29417 / CECT 9101 / MAFF 303099) (Mesorhizobium loti (strain MAFF 303099)).